A 288-amino-acid polypeptide reads, in one-letter code: Threonine-rich protein (288 aa).

The signal sequence occupies residues 1 to 20 (MKAFLLSLATLLACIVLTES). Residues 141–150 (TTVTPQTTDG) are compositionally biased toward polar residues. The interval 141 to 260 (TTVTPQTTDG…PAPTTTPAPT (120 aa)) is disordered. Residues 151 to 253 (NTTTEAPTST…TAAPTTTPAP (103 aa)) are compositionally biased toward low complexity.

As to expression, component of the acid-insoluble and acid-soluble organic matrix of the aragonitic skeleton (at protein level).

The protein resides in the secreted. In Acropora millepora (Staghorn coral), this protein is Threonine-rich protein.